The following is a 286-amino-acid chain: Bifunctional protein FolD (286 aa).

NADP(+)-binding positions include 168–170, threonine 195, and valine 236; that span reads GRG.

The protein belongs to the tetrahydrofolate dehydrogenase/cyclohydrolase family. In terms of assembly, homodimer.

It catalyses the reaction (6R)-5,10-methylene-5,6,7,8-tetrahydrofolate + NADP(+) = (6R)-5,10-methenyltetrahydrofolate + NADPH. The enzyme catalyses (6R)-5,10-methenyltetrahydrofolate + H2O = (6R)-10-formyltetrahydrofolate + H(+). It participates in one-carbon metabolism; tetrahydrofolate interconversion. Catalyzes the oxidation of 5,10-methylenetetrahydrofolate to 5,10-methenyltetrahydrofolate and then the hydrolysis of 5,10-methenyltetrahydrofolate to 10-formyltetrahydrofolate. The polypeptide is Bifunctional protein FolD (Mycolicibacterium gilvum (strain PYR-GCK) (Mycobacterium gilvum (strain PYR-GCK))).